We begin with the raw amino-acid sequence, 258 residues long: Phosphate import ATP-binding protein PstB 2 (258 aa).

Positions 12-253 (IQVRDLNFYY…PRQKQTEDYI (242 aa)) constitute an ABC transporter domain. 44 to 51 (GPSGCGKS) serves as a coordination point for ATP.

Belongs to the ABC transporter superfamily. Phosphate importer (TC 3.A.1.7) family. As to quaternary structure, the complex is composed of two ATP-binding proteins (PstB), two transmembrane proteins (PstC and PstA) and a solute-binding protein (PstS).

The protein localises to the cell inner membrane. It catalyses the reaction phosphate(out) + ATP + H2O = ADP + 2 phosphate(in) + H(+). Its function is as follows. Part of the ABC transporter complex PstSACB involved in phosphate import. Responsible for energy coupling to the transport system. In Pectobacterium atrosepticum (strain SCRI 1043 / ATCC BAA-672) (Erwinia carotovora subsp. atroseptica), this protein is Phosphate import ATP-binding protein PstB 2.